The primary structure comprises 642 residues: Probable glutamate--tRNA ligase, cytoplasmic (642 aa).

152-154 (RFP) contributes to the L-glutamate binding site. A 'HIGH' region motif is present at residues 157 to 166 (PNGRLHIGHA). H162 contributes to the ATP binding site. L-glutamate contacts are provided by residues D188, 326–330 (YDFAC), and R344. Residues E347 and 382 to 386 (VLSKR) contribute to the ATP site. The 'KMSKS' region signature appears at 382–386 (VLSKR).

This sequence belongs to the class-I aminoacyl-tRNA synthetase family. Glutamate--tRNA ligase type 2 subfamily.

It is found in the cytoplasm. It carries out the reaction tRNA(Glu) + L-glutamate + ATP = L-glutamyl-tRNA(Glu) + AMP + diphosphate. The polypeptide is Probable glutamate--tRNA ligase, cytoplasmic (Encephalitozoon cuniculi (strain GB-M1) (Microsporidian parasite)).